We begin with the raw amino-acid sequence, 115 residues long: DNA-binding protein Ta0052 (115 aa).

The interval 1-41 is disordered; it reads MDDDEELERIRRQQLESMQRQAMQEQMREEQEKQREAERAR. Residues 15 to 25 show a composition bias toward low complexity; it reads LESMQRQAMQE. A compositionally biased stretch (basic and acidic residues) spans 26–41; the sequence is QMREEQEKQREAERAR.

The protein belongs to the PDCD5 family.

This Thermoplasma acidophilum (strain ATCC 25905 / DSM 1728 / JCM 9062 / NBRC 15155 / AMRC-C165) protein is DNA-binding protein Ta0052.